A 101-amino-acid chain; its full sequence is U1-sicaritoxin-Li1a (101 aa).

The signal sequence occupies residues 1-19 (MRFLVGAVLVVVLVACATA). A propeptide spanning residues 20 to 35 (FESDAETFKSLVVEER) is cleaved from the precursor. 4 cysteine pairs are disulfide-bonded: cysteine 37/cysteine 54, cysteine 45/cysteine 59, cysteine 53/cysteine 72, and cysteine 61/cysteine 70. Lysine 81 carries the lysine amide modification. A propeptide spanning residues 85-101 (ALLLPVETHRLLFPEQW) is cleaved from the precursor.

It belongs to the neurotoxin 28 (Litx) family. As to expression, expressed by the venom gland.

It localises to the secreted. Functionally, toxin active against insects (S.frugiperda larvae). May act on sodium (Nav) or calcium channels (Cav). The sequence is that of U1-sicaritoxin-Li1a from Loxosceles intermedia (Brown spider).